A 295-amino-acid chain; its full sequence is Ornithine carbamoyltransferase, catabolic (295 aa).

Residues S49–T52, Q76, R100, and H127–Q130 contribute to the carbamoyl phosphate site. L-ornithine is bound by residues N155, D213, and S217–M218. Residues C253–L254 and R281 contribute to the carbamoyl phosphate site.

This sequence belongs to the aspartate/ornithine carbamoyltransferase superfamily. OTCase family. In terms of assembly, homohexamer.

Its subcellular location is the cytoplasm. It catalyses the reaction carbamoyl phosphate + L-ornithine = L-citrulline + phosphate + H(+). The protein operates within amino-acid degradation; L-arginine degradation via ADI pathway; carbamoyl phosphate from L-arginine: step 2/2. With respect to regulation, arginine lead to a slight activation. Inhibited by all nucleotide phosphates. Reversibly catalyzes the transfer of the carbamoyl group from carbamoyl phosphate (CP) to the N(epsilon) atom of ornithine (ORN) to produce L-citrulline. This chain is Ornithine carbamoyltransferase, catabolic (arcB), found in Halobacterium salinarum (strain ATCC 700922 / JCM 11081 / NRC-1) (Halobacterium halobium).